A 336-amino-acid polypeptide reads, in one-letter code: Myb family transcription factor PHL8 (336 aa).

The HTH myb-type domain maps to 31–91; it reads TDAKPRLKWT…HLQKYRLGKS (61 aa). Residues 62-87 constitute a DNA-binding region (H-T-H motif); the sequence is PKGLMKVMEIPGLTLYHLKSHLQKYR. The interval 100–134 is disordered; that stretch reads EVSSASENQEVESKNDSRDLRGCSVTEENSNPAKE. The span at 110 to 120 shows a compositional bias: basic and acidic residues; it reads VESKNDSRDLR. Positions 139–159 form a coiled coil; that stretch reads TEALQMQMEVQKKLHEQIEVQ. Residues 152–157 carry the LHEQLE motif; that stretch reads LHEQIE.

The protein belongs to the MYB-CC family.

The protein localises to the nucleus. The chain is Myb family transcription factor PHL8 from Arabidopsis thaliana (Mouse-ear cress).